We begin with the raw amino-acid sequence, 95 residues long: MGSMSVWHWVIVAVVVMLLFGRGKVSELMGDVAKGIKAFKKGMADDETQPNTATSVPPVGPNDPVRTLPHQGAPGTAPQPPHVQPHVSAGDHKAV.

A helical membrane pass occupies residues 1–21 (MGSMSVWHWVIVAVVVMLLFG). Residues 42–95 (GMADDETQPNTATSVPPVGPNDPVRTLPHQGAPGTAPQPPHVQPHVSAGDHKAV) are disordered.

This sequence belongs to the TatA/E family. The Tat system comprises two distinct complexes: a TatABC complex, containing multiple copies of TatA, TatB and TatC subunits, and a separate TatA complex, containing only TatA subunits. Substrates initially bind to the TatABC complex, which probably triggers association of the separate TatA complex to form the active translocon.

It localises to the cell inner membrane. Functionally, part of the twin-arginine translocation (Tat) system that transports large folded proteins containing a characteristic twin-arginine motif in their signal peptide across membranes. TatA could form the protein-conducting channel of the Tat system. This chain is Sec-independent protein translocase protein TatA, found in Methylorubrum extorquens (strain CM4 / NCIMB 13688) (Methylobacterium extorquens).